A 173-amino-acid polypeptide reads, in one-letter code: Crossover junction endodeoxyribonuclease RuvC (173 aa).

Residues D8, E69, and D141 contribute to the active site. Residues D8, E69, and D141 each contribute to the Mg(2+) site.

It belongs to the RuvC family. As to quaternary structure, homodimer which binds Holliday junction (HJ) DNA. The HJ becomes 2-fold symmetrical on binding to RuvC with unstacked arms; it has a different conformation from HJ DNA in complex with RuvA. In the full resolvosome a probable DNA-RuvA(4)-RuvB(12)-RuvC(2) complex forms which resolves the HJ. Requires Mg(2+) as cofactor.

It is found in the cytoplasm. It carries out the reaction Endonucleolytic cleavage at a junction such as a reciprocal single-stranded crossover between two homologous DNA duplexes (Holliday junction).. Its function is as follows. The RuvA-RuvB-RuvC complex processes Holliday junction (HJ) DNA during genetic recombination and DNA repair. Endonuclease that resolves HJ intermediates. Cleaves cruciform DNA by making single-stranded nicks across the HJ at symmetrical positions within the homologous arms, yielding a 5'-phosphate and a 3'-hydroxyl group; requires a central core of homology in the junction. The consensus cleavage sequence is 5'-(A/T)TT(C/G)-3'. Cleavage occurs on the 3'-side of the TT dinucleotide at the point of strand exchange. HJ branch migration catalyzed by RuvA-RuvB allows RuvC to scan DNA until it finds its consensus sequence, where it cleaves and resolves the cruciform DNA. This chain is Crossover junction endodeoxyribonuclease RuvC, found in Xylella fastidiosa (strain 9a5c).